The chain runs to 76 residues: Acyl carrier protein (76 aa).

Residues 1–76 (MSIEERVKKI…SAIDYVQNNQ (76 aa)) enclose the Carrier domain. The residue at position 36 (Ser36) is an O-(pantetheine 4'-phosphoryl)serine.

It belongs to the acyl carrier protein (ACP) family. In terms of processing, 4'-phosphopantetheine is transferred from CoA to a specific serine of apo-ACP by AcpS. This modification is essential for activity because fatty acids are bound in thioester linkage to the sulfhydryl of the prosthetic group.

The protein localises to the cytoplasm. The protein operates within lipid metabolism; fatty acid biosynthesis. Carrier of the growing fatty acid chain in fatty acid biosynthesis. This chain is Acyl carrier protein, found in Pasteurella multocida (strain Pm70).